Reading from the N-terminus, the 196-residue chain is Recombination protein RecR (196 aa).

Residues 57-72 form a C4-type zinc finger; it reads CERCHTFTEGAVCETC. A Toprim domain is found at 80–175; that stretch reads TRLCVVETPA…HVTRLARGVP (96 aa).

Belongs to the RecR family.

Its function is as follows. May play a role in DNA repair. It seems to be involved in an RecBC-independent recombinational process of DNA repair. It may act with RecF and RecO. The chain is Recombination protein RecR from Acidovorax sp. (strain JS42).